We begin with the raw amino-acid sequence, 688 residues long: Glycine--tRNA ligase beta subunit (688 aa).

It belongs to the class-II aminoacyl-tRNA synthetase family. As to quaternary structure, tetramer of two alpha and two beta subunits.

It localises to the cytoplasm. The enzyme catalyses tRNA(Gly) + glycine + ATP = glycyl-tRNA(Gly) + AMP + diphosphate. This chain is Glycine--tRNA ligase beta subunit, found in Shewanella sp. (strain ANA-3).